The sequence spans 930 residues: Wings apart-like protein 1 (930 aa).

A disordered region spans residues 540-566 (FSPTSMSGSQSSVSGNEPTTSKTRVGS). The span at 541-553 (SPTSMSGSQSSVS) shows a compositional bias: low complexity. Residues 554 to 566 (GNEPTTSKTRVGS) show a composition bias toward polar residues. Residues 854–909 (KEAEKMIVEAYSALLLAFLSTESRSIRNSIKDYLPKRNLAILVPVLERFVAFHMTL) enclose the WAPL domain.

The protein belongs to the WAPL family. As to quaternary structure, interacts with the cohesin complex throughout the cell cycle. In terms of tissue distribution, expressed in roots, leaves, buds and siliques.

It is found in the nucleus. The protein resides in the chromosome. In terms of biological role, regulator of sister chromatid cohesion in meiosis which negatively regulates cohesin association with chromatin, acting as an antagonist of CTF7. Cohesion ensures that chromosome partitioning is accurate in both meiotic and mitotic cells and plays an important role in DNA repair. Essential for the prophase removal of cohesin during meiosis thus determining the timely release of meiotic cohesion. Important for proper spindle attachment and assembly during meiosis. Helps to prevent abnormal centromere association during prophase I in meiocytes. Required for early embryonic patterning. Also involved in chromosome segregation during mitosis. This is Wings apart-like protein 1 from Arabidopsis thaliana (Mouse-ear cress).